The sequence spans 273 residues: Large ribosomal subunit protein uL2cz/uL2cy (273 aa).

Disordered stretches follow at residues 1 to 22 (MAIH…DSQV) and 223 to 254 (MNPV…PALG).

This sequence belongs to the universal ribosomal protein uL2 family. Part of the 50S ribosomal subunit.

The protein resides in the plastid. It localises to the chloroplast. The polypeptide is Large ribosomal subunit protein uL2cz/uL2cy (rpl2-A) (Drimys granadensis).